The sequence spans 398 residues: Isopenicillin N epimerase (398 aa).

Position 219 is an N6-(pyridoxal phosphate)lysine (lysine 219). Residues 243–264 are disordered; the sequence is PQVSWGYRPDGENPSDERNRFG. The span at 251–264 shows a compositional bias: basic and acidic residues; the sequence is PDGENPSDERNRFG.

It belongs to the class-V pyridoxal-phosphate-dependent aminotransferase family. Pyridoxal 5'-phosphate is required as a cofactor.

The catalysed reaction is isopenicillin N = penicillin N. It functions in the pathway antibiotic biosynthesis; cephalosporin C biosynthesis. Functionally, catalyzes the reversible isomerization between isopenicillin N and penicillin N. This is Isopenicillin N epimerase (cefD) from Amycolatopsis lactamdurans (Nocardia lactamdurans).